The chain runs to 236 residues: UPF0257 lipoprotein YnfC (236 aa).

The N-terminal stretch at 1 to 16 (MKKPLLLTLLCMILAG) is a signal peptide. C17 carries N-palmitoyl cysteine lipidation. C17 carries the S-diacylglycerol cysteine lipid modification.

The protein belongs to the UPF0257 family.

It is found in the cell membrane. This is UPF0257 lipoprotein YnfC from Salmonella heidelberg (strain SL476).